A 245-amino-acid chain; its full sequence is 1-(5-phosphoribosyl)-5-[(5-phosphoribosylamino)methylideneamino] imidazole-4-carboxamide isomerase (245 aa).

Aspartate 7 functions as the Proton acceptor in the catalytic mechanism. The active-site Proton donor is aspartate 129.

It belongs to the HisA/HisF family.

The protein resides in the cytoplasm. It carries out the reaction 1-(5-phospho-beta-D-ribosyl)-5-[(5-phospho-beta-D-ribosylamino)methylideneamino]imidazole-4-carboxamide = 5-[(5-phospho-1-deoxy-D-ribulos-1-ylimino)methylamino]-1-(5-phospho-beta-D-ribosyl)imidazole-4-carboxamide. Its pathway is amino-acid biosynthesis; L-histidine biosynthesis; L-histidine from 5-phospho-alpha-D-ribose 1-diphosphate: step 4/9. In Tolumonas auensis (strain DSM 9187 / NBRC 110442 / TA 4), this protein is 1-(5-phosphoribosyl)-5-[(5-phosphoribosylamino)methylideneamino] imidazole-4-carboxamide isomerase.